A 289-amino-acid polypeptide reads, in one-letter code: CBY1-interacting BAR domain-containing protein 1 (289 aa).

The N-terminal 47 residues, 1–47 (MMRRTLENRNAQTKQLQTAVSNVEKHFGELCQIFAAYVRKTARLRDK), are a transit peptide targeting the mitochondrion. The segment at 10-220 (NAQTKQLQTA…NIDEDEDLEV (211 aa)) is BAR-like. A coiled-coil region spans residues 107–178 (KMKRDDLKAT…INNFERQKMK (72 aa)). Positions 265-289 (LRKDQQAEDDEDDELDVTEEENFLK) are disordered. Acidic residues predominate over residues 271–289 (AEDDEDDELDVTEEENFLK).

This sequence belongs to the CIBAR family. Homodimer (via BAR-like domain). Heterodimer with FAM92B (via BAR-like domains). Interacts (via BAR-like domain) with CBY1; this interaction is required for targeting FAM92A to centriole and cilium basal body. Interacts (via BAR-like domain) with CBY3; both proteins form a ninefold symmetric structure at the flagellar base; are recruited to the annulus in a mutually dependent manner and regulate annulus positionning.

The protein localises to the cytoplasm. It localises to the cytoskeleton. Its subcellular location is the microtubule organizing center. It is found in the centrosome. The protein resides in the centriole. The protein localises to the cilium basal body. It localises to the cell projection. Its subcellular location is the cilium. It is found in the nucleus. The protein resides in the mitochondrion inner membrane. The protein localises to the flagellum. In terms of biological role, plays a critical role in regulating mitochondrial ultrastructure and function by maintaining the integrity of mitochondrial morphology, particularly the organization of cristae. Preferentially binds to negatively charged phospholipids like cardiolipin and phosphatidylinositol 4,5-bisphosphate enhancing its interaction with mitochondrial membranes. Induces membrane curvature and tubulation, which are critical for maintaining mitochondrial ultrastructure and the organization of cristae. Plays a crucial role in ciliogenesis. May play a role in limb development through its role in ciliogenesis. Plays a key role in the correct positioning of the annulus, a septin-based ring structure in the sperm flagellum, serving both as a physical barrier and a membrane diffusion barrier that separates the midpiece (MP) from the principal piece (PP). This positioning is essential for proper sperm motility and function. Interacts with CBY3 to form a complex which localizes to the curved membrane region of the flagellar pocket. By doing so, may provide stability and rigidity to the periannular membrane to prevent membrane deformation. This function is crucial for halting annulus migration at the proximal end of the fibrous sheath-containing PP. The sequence is that of CBY1-interacting BAR domain-containing protein 1 from Homo sapiens (Human).